A 384-amino-acid polypeptide reads, in one-letter code: Lipid-A-disaccharide synthase 1 (384 aa).

This sequence belongs to the LpxB family.

The enzyme catalyses a lipid X + a UDP-2-N,3-O-bis[(3R)-3-hydroxyacyl]-alpha-D-glucosamine = a lipid A disaccharide + UDP + H(+). The protein operates within bacterial outer membrane biogenesis; LPS lipid A biosynthesis. In terms of biological role, condensation of UDP-2,3-diacylglucosamine and 2,3-diacylglucosamine-1-phosphate to form lipid A disaccharide, a precursor of lipid A, a phosphorylated glycolipid that anchors the lipopolysaccharide to the outer membrane of the cell. The sequence is that of Lipid-A-disaccharide synthase 1 from Legionella pneumophila subsp. pneumophila (strain Philadelphia 1 / ATCC 33152 / DSM 7513).